The primary structure comprises 471 residues: Microtubule-associated tyrosine carboxypeptidase 1 (471 aa).

2 disordered regions span residues 1–40 (MVLD…PLYP) and 76–116 (HMRR…LRPA). His-280 contacts Zn(2+). Catalysis depends on Glu-281, which acts as the Nucleophile. Zn(2+) is bound by residues His-285 and Glu-316.

It belongs to the peptidase MATCAP family. It depends on Zn(2+) as a cofactor.

It localises to the cytoplasm. The protein resides in the cytoskeleton. It carries out the reaction C-terminal L-alpha-aminoacyl-L-glutamyl-L-glutamyl-L-tyrosyl-[tubulin] + H2O = C-terminal L-alpha-aminoacyl-L-glutamyl-L-glutamyl-[tubulin] + L-tyrosine. The enzyme catalyses C-terminal L-alpha-aminoacyl-L-glutamyl-L-glutamyl-L-phenylalanyl-[tubulin] + H2O = C-terminal L-alpha-aminoacyl-L-glutamyl-L-glutamyl-[tubulin] + L-phenylalanine. In terms of biological role, tyrosine carboxypeptidase that removes the C-terminal tyrosine residue of alpha-tubulin, thereby regulating microtubule dynamics and function. Also able to remove the C-terminal phenylalanine residue of alpha-tubulin TUBA8. Recognizes adjacent tubulin dimers along the same protofilament. This chain is Microtubule-associated tyrosine carboxypeptidase 1, found in Homo sapiens (Human).